A 136-amino-acid chain; its full sequence is UPF0102 protein BBta_0181 (136 aa).

It belongs to the UPF0102 family.

The sequence is that of UPF0102 protein BBta_0181 from Bradyrhizobium sp. (strain BTAi1 / ATCC BAA-1182).